The sequence spans 215 residues: Adenylate kinase (215 aa).

10–15 (GAGKGT) serves as a coordination point for ATP. The tract at residues 30–59 (STGDMLRAAVKAGSPLGQQVKGVMDSGGLV) is NMP. AMP is bound by residues Thr-31, Arg-36, 57–59 (GLV), 85–88 (GFPR), and Gln-92. The interval 122–159 (GRRVHPASGRVYHTEHNPPKVAGKDDVTGEELIQREDD) is LID. ATP-binding positions include Arg-123 and 132 to 133 (VY). Residues Arg-156 and Arg-167 each contribute to the AMP site. Residue Gly-201 participates in ATP binding.

Belongs to the adenylate kinase family. Monomer.

The protein resides in the cytoplasm. The enzyme catalyses AMP + ATP = 2 ADP. It functions in the pathway purine metabolism; AMP biosynthesis via salvage pathway; AMP from ADP: step 1/1. Its function is as follows. Catalyzes the reversible transfer of the terminal phosphate group between ATP and AMP. Plays an important role in cellular energy homeostasis and in adenine nucleotide metabolism. This chain is Adenylate kinase, found in Pseudomonas aeruginosa (strain LESB58).